The following is a 419-amino-acid chain: Zinc finger protein Pegasus (419 aa).

3 C2H2-type zinc fingers span residues 79–101 (LKCR…IRIH), 107–129 (HRCH…MRSH), and 135–158 (YKCE…RRRH). Disordered stretches follow at residues 203 to 255 (LQKP…DQDM) and 310 to 360 (SVNT…TPVQ). Residues 208–228 (SEQHHLGDFTHDLPPHAHLHQ) show a composition bias toward basic and acidic residues. 2 stretches are compositionally biased toward polar residues: residues 310 to 320 (SVNTAQASSPI) and 341 to 360 (ERTS…TPVQ). C2H2-type zinc fingers lie at residues 366–388 (HHCP…MGCH) and 394–418 (FQCN…RGQH).

It belongs to the Ikaros C2H2-type zinc-finger protein family. As to quaternary structure, probably self-associates.

It is found in the nucleus. Transcriptional repressor that binds the core 5'GNNTGTNG-3' DNA consensus sequence. In Danio rerio (Zebrafish), this protein is Zinc finger protein Pegasus (ikzf5).